The chain runs to 261 residues: Probable trans-aconitate 2-methyltransferase (261 aa).

This sequence belongs to the methyltransferase superfamily. Tam family.

The protein localises to the cytoplasm. It carries out the reaction trans-aconitate + S-adenosyl-L-methionine = (E)-3-(methoxycarbonyl)pent-2-enedioate + S-adenosyl-L-homocysteine. In terms of biological role, catalyzes the S-adenosylmethionine monomethyl esterification of trans-aconitate. The sequence is that of Probable trans-aconitate 2-methyltransferase from Mycobacterium bovis (strain ATCC BAA-935 / AF2122/97).